The primary structure comprises 265 residues: U6 snRNA phosphodiesterase 1 (265 aa).

The tract at residues 1–22 is disordered; sequence MSLVCYESSSSGEDDDETISDN. Histidine 109 (proton acceptor) is an active-site residue. Residues 109-111 and 195-201 contribute to the AMP site; these read HLS and DFLLHIS. 197-201 is a UMP binding site; it reads LLHIS. The active-site Proton donor is the histidine 199.

This sequence belongs to the 2H phosphoesterase superfamily. USB1 family.

It is found in the nucleus. It catalyses the reaction a 3'-end uridylyl-uridine-RNA = a 3'-end 2',3'-cyclophospho-uridine-RNA + uridine. In terms of biological role, 3'-5' RNA exonuclease that trims the 3' end of oligo(U) tracts of the pre-U6 small nuclear RNA (snRNA) molecule, leading to the formation of a U6 snRNA 3' end-terminated with a 2',3'-cyclic phosphate.d. Participates in the U6 snRNA 3' end processing that prevents U6 snRNA degradation. The protein is U6 snRNA phosphodiesterase 1 of Schizosaccharomyces pombe (strain 972 / ATCC 24843) (Fission yeast).